A 269-amino-acid polypeptide reads, in one-letter code: GTP cyclohydrolase FolE2 (269 aa).

The protein belongs to the GTP cyclohydrolase IV family.

The enzyme catalyses GTP + H2O = 7,8-dihydroneopterin 3'-triphosphate + formate + H(+). It participates in cofactor biosynthesis; 7,8-dihydroneopterin triphosphate biosynthesis; 7,8-dihydroneopterin triphosphate from GTP: step 1/1. Converts GTP to 7,8-dihydroneopterin triphosphate. This chain is GTP cyclohydrolase FolE2, found in Burkholderia ambifaria (strain MC40-6).